Consider the following 135-residue polypeptide: Retinol-binding protein 1 (135 aa).

Residues 22–32 form an important for interaction with STRA6 region; it reads RALDVNVALRK. Residues K41, M63, and Q109 each contribute to the all-trans-retinol site.

Belongs to the calycin superfamily. Fatty-acid binding protein (FABP) family. In terms of assembly, interacts (only as retinol-free apoprotein) with STRA6.

It is found in the cytoplasm. It localises to the lipid droplet. Cytoplasmic retinol-binding protein. Accepts retinol from the transport protein STRA6, and thereby contributes to retinol uptake, storage and retinoid homeostasis. In Bos taurus (Bovine), this protein is Retinol-binding protein 1 (RBP1).